We begin with the raw amino-acid sequence, 634 residues long: Formate--tetrahydrofolate ligase (634 aa).

Residue threonine 78–serine 85 participates in ATP binding.

Belongs to the formate--tetrahydrofolate ligase family. In terms of assembly, homodimer.

It carries out the reaction (6S)-5,6,7,8-tetrahydrofolate + formate + ATP = (6R)-10-formyltetrahydrofolate + ADP + phosphate. Its pathway is one-carbon metabolism; tetrahydrofolate interconversion. The chain is Formate--tetrahydrofolate ligase (THFS) from Arabidopsis thaliana (Mouse-ear cress).